The following is an 86-amino-acid chain: CRISPR-associated endoribonuclease Cas2 (86 aa).

Residue Asp-8 coordinates Mg(2+).

This sequence belongs to the CRISPR-associated endoribonuclease Cas2 protein family. Homodimer, forms a heterotetramer with a Cas1 homodimer. Mg(2+) serves as cofactor.

In terms of biological role, CRISPR (clustered regularly interspaced short palindromic repeat), is an adaptive immune system that provides protection against mobile genetic elements (viruses, transposable elements and conjugative plasmids). CRISPR clusters contain sequences complementary to antecedent mobile elements and target invading nucleic acids. CRISPR clusters are transcribed and processed into CRISPR RNA (crRNA). Functions as a ssRNA-specific endoribonuclease. Involved in the integration of spacer DNA into the CRISPR cassette. Plasmid targeted by CRISPR locus P1 transform wild-type cells very poorly. The protein is CRISPR-associated endoribonuclease Cas2 of Haloferax volcanii (strain ATCC 29605 / DSM 3757 / JCM 8879 / NBRC 14742 / NCIMB 2012 / VKM B-1768 / DS2) (Halobacterium volcanii).